The chain runs to 334 residues: Uracil-DNA glycosylase (334 aa).

Basic residues predominate over residues methionine 1 to serine 17. Disordered regions lie at residues methionine 1 to serine 63 and valine 79 to serine 104. The span at glycine 40 to arginine 50 shows a compositional bias: polar residues. Catalysis depends on aspartate 178, which acts as the Proton acceptor.

It belongs to the uracil-DNA glycosylase (UDG) superfamily. UNG family.

It is found in the host nucleus. The catalysed reaction is Hydrolyzes single-stranded DNA or mismatched double-stranded DNA and polynucleotides, releasing free uracil.. Its function is as follows. Excises uracil residues from the DNA which can arise as a result of misincorporation of dUMP residues by DNA polymerase or deamination of cytosines. Therefore may reduce deleterious uracil incorporation into the viral genome, particularly in terminally differentiated cells which lack DNA repair enzymes. The polypeptide is Uracil-DNA glycosylase (Human herpesvirus 1 (strain 17) (HHV-1)).